Reading from the N-terminus, the 115-residue chain is UPF0102 protein NMA0341 (115 aa).

The protein belongs to the UPF0102 family.

The protein is UPF0102 protein NMA0341 of Neisseria meningitidis serogroup A / serotype 4A (strain DSM 15465 / Z2491).